The chain runs to 461 residues: tRNA modification GTPase MnmE (461 aa).

3 residues coordinate (6S)-5-formyl-5,6,7,8-tetrahydrofolate: arginine 22, glutamate 87, and arginine 126. Residues 222 to 382 (GLKTVIVGKP…LEETIFNMVV (161 aa)) enclose the TrmE-type G domain. Residue asparagine 232 participates in K(+) binding. GTP is bound by residues 232–237 (NVGKSS), 251–257 (TDIPGTT), and 276–279 (DTAG). Serine 236 provides a ligand contact to Mg(2+). Residues threonine 251, isoleucine 253, and threonine 256 each coordinate K(+). Residue threonine 257 participates in Mg(2+) binding. Lysine 461 contacts (6S)-5-formyl-5,6,7,8-tetrahydrofolate.

Belongs to the TRAFAC class TrmE-Era-EngA-EngB-Septin-like GTPase superfamily. TrmE GTPase family. Homodimer. Heterotetramer of two MnmE and two MnmG subunits. The cofactor is K(+).

It localises to the cytoplasm. In terms of biological role, exhibits a very high intrinsic GTPase hydrolysis rate. Involved in the addition of a carboxymethylaminomethyl (cmnm) group at the wobble position (U34) of certain tRNAs, forming tRNA-cmnm(5)s(2)U34. This chain is tRNA modification GTPase MnmE, found in Desulforamulus reducens (strain ATCC BAA-1160 / DSM 100696 / MI-1) (Desulfotomaculum reducens).